The following is a 129-amino-acid chain: Small ribosomal subunit protein uS8 (129 aa).

Belongs to the universal ribosomal protein uS8 family. In terms of assembly, part of the 30S ribosomal subunit.

In terms of biological role, one of the primary rRNA binding proteins, it binds directly to 16S rRNA central domain where it helps coordinate assembly of the platform of the 30S subunit. This is Small ribosomal subunit protein uS8 from Picrophilus torridus (strain ATCC 700027 / DSM 9790 / JCM 10055 / NBRC 100828 / KAW 2/3).